The following is a 364-amino-acid chain: MKDNSSWSCSCSWSSWKICLLSVLFLTETITAVKLPPKLIIPAVIAFGDSIVDTGMNNNVKTVVKCDFLPYGINFQSGVATGRFCDGRVPADLLAEELGIKSIVPAYLDPNLKSKDLLTGVSFASGGSGYDPITPKLVAVISLEDQLSYFEEYIEKVKNIVGEARKDFIVANSLFLLVAGSDDIANTYYTLRARPEYDVDSYTTLMSDSASEFVTKLYGYGVRRVAVFGAPPIGCVPSQRTLGGGILRDCADNYNEAAKLFNSKLSPKLDSLRKTLPGIKPIYINIYDPLFDIIQNPANYGFEVSNKGCCGTGAIEVAVLCNKITSSVCPDVSTHVFWDSYHPTEKTYKVLVSLLINKFVNQFV.

Residues M1 to A32 form the signal peptide. S50 functions as the Nucleophile in the catalytic mechanism. Residues D339 and H342 contribute to the active site.

This sequence belongs to the 'GDSL' lipolytic enzyme family. Flower buds.

It localises to the secreted. The sequence is that of GDSL esterase/lipase EXL3 (EXL3) from Arabidopsis thaliana (Mouse-ear cress).